The primary structure comprises 89 residues: UPF0237 protein CPE1496 (89 aa).

Residues 4-84 form the ACT domain; sequence VITVVGKDKV…ISVQHEDIFN (81 aa).

This sequence belongs to the UPF0237 family.

The polypeptide is UPF0237 protein CPE1496 (Clostridium perfringens (strain 13 / Type A)).